The chain runs to 123 residues: Periplasmic [Fe] hydrogenase small subunit (123 aa).

A signal peptide (tat-type signal) is located at residues 1–34; the sequence is MQIASITRRGFLKVACVTTGAALIGIRMTGKAVA. The disordered stretch occupies residues 103–123; that stretch reads TTAGKLPNPRASEFEGPYPYE.

Heterodimer of a large and a small subunit. In terms of processing, predicted to be exported by the Tat system. The position of the signal peptide cleavage has been experimentally proven.

The protein localises to the periplasm. It catalyses the reaction H2 + 2 oxidized [2Fe-2S]-[ferredoxin] = 2 reduced [2Fe-2S]-[ferredoxin] + 2 H(+). In terms of biological role, may be involved in hydrogen uptake for the reduction of sulfate to hydrogen sulfide in an electron transport chain. Cytochrome c3 is likely to be the physiological electron carrier for the enzyme. This chain is Periplasmic [Fe] hydrogenase small subunit (hydB), found in Nitratidesulfovibrio vulgaris (strain ATCC 29579 / DSM 644 / CCUG 34227 / NCIMB 8303 / VKM B-1760 / Hildenborough) (Desulfovibrio vulgaris).